Here is a 239-residue protein sequence, read N- to C-terminus: Large ribosomal subunit protein uL1 (239 aa).

The protein belongs to the universal ribosomal protein uL1 family. In terms of assembly, part of the 50S ribosomal subunit.

In terms of biological role, binds directly to 23S rRNA. The L1 stalk is quite mobile in the ribosome, and is involved in E site tRNA release. Its function is as follows. Protein L1 is also a translational repressor protein, it controls the translation of the L11 operon by binding to its mRNA. The sequence is that of Large ribosomal subunit protein uL1 from Rickettsia akari (strain Hartford).